The following is a 538-amino-acid chain: CTP synthase (538 aa).

The interval 1–267 (MDRAKFIFVT…LTPIARRFNL (267 aa)) is amidoligase domain. CTP is bound at residue Ser-15. Ser-15 contacts UTP. ATP is bound by residues 16-21 (SLGKGI) and Asp-73. Residues Asp-73 and Glu-141 each contribute to the Mg(2+) site. CTP-binding positions include 148–150 (DME), 188–193 (KTKPTQ), and Lys-224. Residues 188-193 (KTKPTQ) and Lys-224 each bind UTP. Residues 292–538 (KIGFVGKYLS…DFIKSALSKS (247 aa)) enclose the Glutamine amidotransferase type-1 domain. Gly-351 is an L-glutamine binding site. Cys-378 serves as the catalytic Nucleophile; for glutamine hydrolysis. Residues 379–382 (LGMQ), Glu-402, and Arg-469 each bind L-glutamine. Residues His-513 and Glu-515 contribute to the active site.

The protein belongs to the CTP synthase family. In terms of assembly, homotetramer.

The enzyme catalyses UTP + L-glutamine + ATP + H2O = CTP + L-glutamate + ADP + phosphate + 2 H(+). It catalyses the reaction L-glutamine + H2O = L-glutamate + NH4(+). It carries out the reaction UTP + NH4(+) + ATP = CTP + ADP + phosphate + 2 H(+). The protein operates within pyrimidine metabolism; CTP biosynthesis via de novo pathway; CTP from UDP: step 2/2. Allosterically activated by GTP, when glutamine is the substrate; GTP has no effect on the reaction when ammonia is the substrate. The allosteric effector GTP functions by stabilizing the protein conformation that binds the tetrahedral intermediate(s) formed during glutamine hydrolysis. Inhibited by the product CTP, via allosteric rather than competitive inhibition. Its function is as follows. Catalyzes the ATP-dependent amination of UTP to CTP with either L-glutamine or ammonia as the source of nitrogen. Regulates intracellular CTP levels through interactions with the four ribonucleotide triphosphates. The chain is CTP synthase from Helicobacter pylori (strain HPAG1).